Here is a 133-residue protein sequence, read N- to C-terminus: MKNLSIFLFVVGLCMISDVYGKKSTITVKNELNPKNKNILKVHCKSKNNDIGVKYLKIGEVMSFSFKTNFWGTTEFWCNLYKGPDYKRYRGITAYQAIGLFAKDGSSYNWLARDDGIYFHKDSLPSYYKTYWL.

The signal sequence occupies residues 1-21 (MKNLSIFLFVVGLCMISDVYG).

This sequence belongs to the plant self-incompatibility (S1) protein family.

It localises to the secreted. The protein is S-protein homolog 21 of Arabidopsis thaliana (Mouse-ear cress).